The following is a 786-amino-acid chain: Endonuclease MutS2 (786 aa).

335–342 (GPNTGGKT) is a binding site for ATP. A Smr domain is found at 711 to 786 (LDLRGERFEN…GLGVTVVELK (76 aa)).

It belongs to the DNA mismatch repair MutS family. MutS2 subfamily. As to quaternary structure, homodimer. Binds to stalled ribosomes, contacting rRNA.

In terms of biological role, endonuclease that is involved in the suppression of homologous recombination and thus may have a key role in the control of bacterial genetic diversity. Functionally, acts as a ribosome collision sensor, splitting the ribosome into its 2 subunits. Detects stalled/collided 70S ribosomes which it binds and splits by an ATP-hydrolysis driven conformational change. Acts upstream of the ribosome quality control system (RQC), a ribosome-associated complex that mediates the extraction of incompletely synthesized nascent chains from stalled ribosomes and their subsequent degradation. Probably generates substrates for RQC. The polypeptide is Endonuclease MutS2 (Bacillus cereus (strain AH820)).